Reading from the N-terminus, the 100-residue chain is Large ribosomal subunit protein uL23 (100 aa).

It belongs to the universal ribosomal protein uL23 family. In terms of assembly, part of the 50S ribosomal subunit. Contacts protein L29, and trigger factor when it is bound to the ribosome.

Its function is as follows. One of the early assembly proteins it binds 23S rRNA. One of the proteins that surrounds the polypeptide exit tunnel on the outside of the ribosome. Forms the main docking site for trigger factor binding to the ribosome. The chain is Large ribosomal subunit protein uL23 from Synechococcus sp. (strain CC9605).